The following is a 151-amino-acid chain: Shadow of prion protein (151 aa).

An N-terminal signal peptide occupies residues 1–24; it reads MNWAPATCWALLLAAAFLCDSGAA. The segment at 89–113 is disordered; it reads WRRAAGPGERGLEDEEDGVPGGNGT. N-linked (GlcNAc...) asparagine glycosylation is present at N111. Residue G126 is the site of GPI-anchor amidated glycine attachment. Residues 127-151 constitute a propeptide, removed in mature form; that stretch reads AGPTRGPRLCLVLGGALGALGLLRP.

Belongs to the SPRN family. N-glycosylated. Mainly expressed in brain. In brain, it is expressed in hippocampus.

The protein localises to the cell membrane. Prion-like protein that has PrP(C)-like neuroprotective activity. May act as a modulator for the biological actions of normal and abnormal PrP. This is Shadow of prion protein (SPRN) from Homo sapiens (Human).